Here is a 286-residue protein sequence, read N- to C-terminus: Phosphatidylserine decarboxylase proenzyme (286 aa).

Residues Asp-89, His-146, and Ser-252 each act as charge relay system; for autoendoproteolytic cleavage activity in the active site. Ser-252 serves as the catalytic Schiff-base intermediate with substrate; via pyruvic acid; for decarboxylase activity. Ser-252 is modified (pyruvic acid (Ser); by autocatalysis).

The protein belongs to the phosphatidylserine decarboxylase family. PSD-B subfamily. Prokaryotic type I sub-subfamily. As to quaternary structure, heterodimer of a large membrane-associated beta subunit and a small pyruvoyl-containing alpha subunit. The cofactor is pyruvate. Is synthesized initially as an inactive proenzyme. Formation of the active enzyme involves a self-maturation process in which the active site pyruvoyl group is generated from an internal serine residue via an autocatalytic post-translational modification. Two non-identical subunits are generated from the proenzyme in this reaction, and the pyruvate is formed at the N-terminus of the alpha chain, which is derived from the carboxyl end of the proenzyme. The autoendoproteolytic cleavage occurs by a canonical serine protease mechanism, in which the side chain hydroxyl group of the serine supplies its oxygen atom to form the C-terminus of the beta chain, while the remainder of the serine residue undergoes an oxidative deamination to produce ammonia and the pyruvoyl prosthetic group on the alpha chain. During this reaction, the Ser that is part of the protease active site of the proenzyme becomes the pyruvoyl prosthetic group, which constitutes an essential element of the active site of the mature decarboxylase.

Its subcellular location is the cell membrane. The enzyme catalyses a 1,2-diacyl-sn-glycero-3-phospho-L-serine + H(+) = a 1,2-diacyl-sn-glycero-3-phosphoethanolamine + CO2. It participates in phospholipid metabolism; phosphatidylethanolamine biosynthesis; phosphatidylethanolamine from CDP-diacylglycerol: step 2/2. Catalyzes the formation of phosphatidylethanolamine (PtdEtn) from phosphatidylserine (PtdSer). The chain is Phosphatidylserine decarboxylase proenzyme from Shewanella loihica (strain ATCC BAA-1088 / PV-4).